Consider the following 293-residue polypeptide: 4-diphosphocytidyl-2-C-methyl-D-erythritol kinase (293 aa).

Lys-16 is a catalytic residue. Position 99–109 (99–109 (PMGAGLGGGSS)) interacts with ATP. Residue Asp-141 is part of the active site.

The protein belongs to the GHMP kinase family. IspE subfamily.

It carries out the reaction 4-CDP-2-C-methyl-D-erythritol + ATP = 4-CDP-2-C-methyl-D-erythritol 2-phosphate + ADP + H(+). It participates in isoprenoid biosynthesis; isopentenyl diphosphate biosynthesis via DXP pathway; isopentenyl diphosphate from 1-deoxy-D-xylulose 5-phosphate: step 3/6. Functionally, catalyzes the phosphorylation of the position 2 hydroxy group of 4-diphosphocytidyl-2C-methyl-D-erythritol. This chain is 4-diphosphocytidyl-2-C-methyl-D-erythritol kinase, found in Burkholderia ambifaria (strain MC40-6).